An 824-amino-acid chain; its full sequence is MPYPHPYPWQSSRRRRRRRGRDGAPRQPQARRVVERAAAGPGHATTTQQPDNVSSAKVFQTSRVETESEIAKWPGKPQDLEDEHQAEEAELQPLIDQVRAMLRSMNDGDTSASAYDTAWVAMVPKVGGDGGAQPQFPATVRWIVDHQLPDGSWGDSALFSAYDRMINTLACVVALTKWSLEPARCEAGLSFLHENMWRLAEEEAESMPIGFEIAFPSLIQTARDLGVVDFPYGHPALQSIYANREVKLKRIPRDMMHRVPTSILHSLEGMPDLDWPRLLNLQSCDGSFLFSPSATAYALMQTGDKKCFEYIDRIVKKFNGGVPNVYPVDLFEHIWVVDRLERLGISRYFQREIEQCMDYVNRHWTEDGICWARKSNVKDVDDTAMAFRLLRLHGYNVSPSVFKNFEKDGEFFCFVGQSTQAVTGMYNLNRASQISFQGEDVLHRARVFSYEFLRQREEQGMIRDKWIVAKDLPGEVQYTLDFPWYASLPRVEARTYLDQYGGKDDVWIGKTLYRMPLVNNDTYLELAIRDFNHCQALHQLECNGLQTWYKDNCLDAFGVEPQDVLRSYFLAAACIFEPSRAAERLAWARTSMIANAISTHLRDISEDKKRLECFVHCLYEENDVSWLKRNPNDVILERALRRLINLLAQEALPIHEGQRFIHSLLSLAWTEWMLQKANKEENKYHKCSGIEPQYMVHDRQTYLLLVQVIEICAGRIGEAVSMINNKDNDWFIQLTCATCDSLNHRMLLSQDTMKNEARINWIEKEIELNMQELAQSLLLRCDEKTSNKKTKKTLWDVLRSLYYATHSPQHMIDRHVSRVIFEPV.

The N-terminal 63 residues, methionine 1–arginine 63, are a transit peptide targeting the chloroplast. The interval methionine 1 to glutamate 87 is disordered. The segment covering alanine 44 to arginine 63 has biased composition (polar residues). Lysine 247 serves as a coordination point for substrate. Aspartate 379 and aspartate 381 together coordinate Mg(2+). Residues aspartate 379–aspartate 382 carry the DXDD motif motif. A substrate-binding site is contributed by lysine 465.

Belongs to the terpene synthase family. Tpsc subfamily. Mg(2+) serves as cofactor.

It localises to the plastid. The protein resides in the chloroplast. The enzyme catalyses (2E,6E,10E)-geranylgeranyl diphosphate = ent-copalyl diphosphate. Its pathway is plant hormone biosynthesis; gibberellin biosynthesis. Its function is as follows. Involved in giberellin biosynthesis. Catalyzes the conversion of geranylgeranyl diphosphate to the gibberellin precursor ent-copalyl diphosphate. The chain is Ent-copalyl diphosphate synthase AN1, chloroplastic from Zea mays (Maize).